A 292-amino-acid polypeptide reads, in one-letter code: Porphobilinogen deaminase (292 aa).

An S-(dipyrrolylmethanemethyl)cysteine modification is found at Cys-235.

The protein belongs to the HMBS family. Monomer. Dipyrromethane is required as a cofactor.

It carries out the reaction 4 porphobilinogen + H2O = hydroxymethylbilane + 4 NH4(+). The protein operates within porphyrin-containing compound metabolism; protoporphyrin-IX biosynthesis; coproporphyrinogen-III from 5-aminolevulinate: step 2/4. Its function is as follows. Tetrapolymerization of the monopyrrole PBG into the hydroxymethylbilane pre-uroporphyrinogen in several discrete steps. The protein is Porphobilinogen deaminase of Acetivibrio thermocellus (strain ATCC 27405 / DSM 1237 / JCM 9322 / NBRC 103400 / NCIMB 10682 / NRRL B-4536 / VPI 7372) (Clostridium thermocellum).